The following is a 419-amino-acid chain: Tyrosine--tRNA ligase (419 aa).

Tyr34 contacts L-tyrosine. A 'HIGH' region motif is present at residues 39–48 (PTADSLHIGN). L-tyrosine-binding residues include Tyr169 and Gln173. A 'KMSKS' region motif is present at residues 230-234 (KFGKT). Lys233 contributes to the ATP binding site. Positions 352–419 (VPLVELLVSA…KKKYYLIRYA (68 aa)) constitute an S4 RNA-binding domain.

The protein belongs to the class-I aminoacyl-tRNA synthetase family. TyrS type 1 subfamily. Homodimer.

The protein resides in the cytoplasm. It catalyses the reaction tRNA(Tyr) + L-tyrosine + ATP = L-tyrosyl-tRNA(Tyr) + AMP + diphosphate + H(+). Functionally, catalyzes the attachment of tyrosine to tRNA(Tyr) in a two-step reaction: tyrosine is first activated by ATP to form Tyr-AMP and then transferred to the acceptor end of tRNA(Tyr). The sequence is that of Tyrosine--tRNA ligase from Geobacillus kaustophilus (strain HTA426).